The primary structure comprises 236 residues: 2,3,4,5-tetrahydropyridine-2,6-dicarboxylate N-acetyltransferase (236 aa).

It belongs to the transferase hexapeptide repeat family. DapH subfamily.

The enzyme catalyses (S)-2,3,4,5-tetrahydrodipicolinate + acetyl-CoA + H2O = L-2-acetamido-6-oxoheptanedioate + CoA. It functions in the pathway amino-acid biosynthesis; L-lysine biosynthesis via DAP pathway; LL-2,6-diaminopimelate from (S)-tetrahydrodipicolinate (acetylase route): step 1/3. In terms of biological role, catalyzes the transfer of an acetyl group from acetyl-CoA to tetrahydrodipicolinate. This chain is 2,3,4,5-tetrahydropyridine-2,6-dicarboxylate N-acetyltransferase, found in Bacillus velezensis (strain DSM 23117 / BGSC 10A6 / LMG 26770 / FZB42) (Bacillus amyloliquefaciens subsp. plantarum).